A 325-amino-acid polypeptide reads, in one-letter code: Inactive S-adenosylmethionine decarboxylase prozyme (325 aa).

It belongs to the eukaryotic AdoMetDC family. As to quaternary structure, forms a heterodimer with S-adenosylmethionine decarboxylase AdoMetDC; heterodimerization is required to activate AdoMetDC.

It functions in the pathway amine and polyamine biosynthesis; S-adenosylmethioninamine biosynthesis; S-adenosylmethioninamine from S-adenosyl-L-methionine: step 1/1. Its function is as follows. Probably has no catalytic activity due to the loss of several residues required for processing and catalysis. Forms a complex with S-adenosylmethionine decarboxylase AdoMetDC which is essential to activate AdoMetDC. Required for the biosynthesis of the polyamine spermidine. Required for growth and survival during the bloodstream life cycle stage. The polypeptide is Inactive S-adenosylmethionine decarboxylase prozyme (Trypanosoma brucei brucei).